We begin with the raw amino-acid sequence, 713 residues long: Methionine--tRNA ligase (713 aa).

The 'HIGH' region motif lies at 17–27; it reads PYANGPIHIGH. Zn(2+) is bound by residues Cys-149, Cys-152, Cys-162, and Cys-165. The 'KMSKS' region signature appears at 345 to 349; it reads KLSTS. Residue Thr-348 participates in ATP binding. Positions 530–564 are disordered; sequence VRTSTPDDDPAGAVGWEDAGAPLLPAGHPIPSGPD. The region spanning 614–713 is the tRNA-binding domain; sequence DFTQLDLRAG…TEAEDGSVVR (100 aa).

It belongs to the class-I aminoacyl-tRNA synthetase family. MetG type 1 subfamily. Homodimer. Zn(2+) is required as a cofactor.

Its subcellular location is the cytoplasm. It catalyses the reaction tRNA(Met) + L-methionine + ATP = L-methionyl-tRNA(Met) + AMP + diphosphate. Is required not only for elongation of protein synthesis but also for the initiation of all mRNA translation through initiator tRNA(fMet) aminoacylation. The protein is Methionine--tRNA ligase of Salinibacter ruber (strain DSM 13855 / M31).